The following is a 238-amino-acid chain: Pyridoxine 5'-phosphate synthase (238 aa).

N7 serves as a coordination point for 3-amino-2-oxopropyl phosphate. 9-10 is a 1-deoxy-D-xylulose 5-phosphate binding site; the sequence is DH. R18 is a 3-amino-2-oxopropyl phosphate binding site. H43 functions as the Proton acceptor in the catalytic mechanism. Positions 45 and 50 each coordinate 1-deoxy-D-xylulose 5-phosphate. The active-site Proton acceptor is the E70. T100 contacts 1-deoxy-D-xylulose 5-phosphate. The active-site Proton donor is the H190. Residues G191 and 212–213 contribute to the 3-amino-2-oxopropyl phosphate site; that span reads GH.

The protein belongs to the PNP synthase family. Homooctamer; tetramer of dimers.

It localises to the cytoplasm. It carries out the reaction 3-amino-2-oxopropyl phosphate + 1-deoxy-D-xylulose 5-phosphate = pyridoxine 5'-phosphate + phosphate + 2 H2O + H(+). It participates in cofactor biosynthesis; pyridoxine 5'-phosphate biosynthesis; pyridoxine 5'-phosphate from D-erythrose 4-phosphate: step 5/5. Functionally, catalyzes the complicated ring closure reaction between the two acyclic compounds 1-deoxy-D-xylulose-5-phosphate (DXP) and 3-amino-2-oxopropyl phosphate (1-amino-acetone-3-phosphate or AAP) to form pyridoxine 5'-phosphate (PNP) and inorganic phosphate. This Prochlorococcus marinus (strain MIT 9312) protein is Pyridoxine 5'-phosphate synthase.